Reading from the N-terminus, the 292-residue chain is Pyridoxal 5'-phosphate synthase subunit PdxS (292 aa).

Asp22 is a D-ribose 5-phosphate binding site. Lys79 serves as the catalytic Schiff-base intermediate with D-ribose 5-phosphate. Gly151 serves as a coordination point for D-ribose 5-phosphate. Residue Arg163 coordinates D-glyceraldehyde 3-phosphate. D-ribose 5-phosphate contacts are provided by residues Gly212 and 233–234 (GS).

This sequence belongs to the PdxS/SNZ family. In the presence of PdxT, forms a dodecamer of heterodimers.

The catalysed reaction is aldehydo-D-ribose 5-phosphate + D-glyceraldehyde 3-phosphate + L-glutamine = pyridoxal 5'-phosphate + L-glutamate + phosphate + 3 H2O + H(+). The protein operates within cofactor biosynthesis; pyridoxal 5'-phosphate biosynthesis. Its function is as follows. Catalyzes the formation of pyridoxal 5'-phosphate from ribose 5-phosphate (RBP), glyceraldehyde 3-phosphate (G3P) and ammonia. The ammonia is provided by the PdxT subunit. Can also use ribulose 5-phosphate and dihydroxyacetone phosphate as substrates, resulting from enzyme-catalyzed isomerization of RBP and G3P, respectively. The polypeptide is Pyridoxal 5'-phosphate synthase subunit PdxS (Thermoanaerobacter pseudethanolicus (strain ATCC 33223 / 39E) (Clostridium thermohydrosulfuricum)).